A 160-amino-acid chain; its full sequence is Small ribosomal subunit protein uS7 (160 aa).

This sequence belongs to the universal ribosomal protein uS7 family. As to quaternary structure, part of the 30S ribosomal subunit. Contacts proteins S9 and S11.

Functionally, one of the primary rRNA binding proteins, it binds directly to 16S rRNA where it nucleates assembly of the head domain of the 30S subunit. Is located at the subunit interface close to the decoding center, probably blocks exit of the E-site tRNA. This is Small ribosomal subunit protein uS7 from Rickettsia canadensis (strain McKiel).